We begin with the raw amino-acid sequence, 355 residues long: 3-dehydroquinate synthase (355 aa).

Residues 66 to 71 (SGETTK), 100 to 104 (GATGD), 124 to 125 (TT), lysine 136, lysine 145, and 163 to 166 (FLET) each bind NAD(+). Zn(2+) contacts are provided by glutamate 178, histidine 242, and histidine 256.

This sequence belongs to the sugar phosphate cyclases superfamily. Dehydroquinate synthase family. Co(2+) is required as a cofactor. Zn(2+) serves as cofactor. The cofactor is NAD(+).

The protein localises to the cytoplasm. It catalyses the reaction 7-phospho-2-dehydro-3-deoxy-D-arabino-heptonate = 3-dehydroquinate + phosphate. The protein operates within metabolic intermediate biosynthesis; chorismate biosynthesis; chorismate from D-erythrose 4-phosphate and phosphoenolpyruvate: step 2/7. Catalyzes the conversion of 3-deoxy-D-arabino-heptulosonate 7-phosphate (DAHP) to dehydroquinate (DHQ). The sequence is that of 3-dehydroquinate synthase from Staphylococcus saprophyticus subsp. saprophyticus (strain ATCC 15305 / DSM 20229 / NCIMB 8711 / NCTC 7292 / S-41).